The following is a 533-amino-acid chain: Na(+)/H(+) antiporter NhaB (533 aa).

11 helical membrane passes run 10-30 (IGNFLGNSPKWYKIAILSFLI), 67-87 (PGGLLAIEAVAIGMTSASQVL), 98-118 (LLLVFMVAGIYFMKQLLLFVF), 131-165 (VSLLFCLASAFLSAFLDALTVIAVIITVAVGFYSI), 209-229 (LLMHAGVGTALGGVCTMVGEP), 247-267 (IRMSPVTVPVLFAGILTCFIV), 310-330 (AFVGVWLIAGLALHLASVGLI), 355-375 (EEALPFTALLAVFFAVVAVII), 396-416 (LVIFYIANGLLSMVSDNVFVG), 454-474 (ATPNGQAAFLFLLTSALAPLI), and 481-501 (MVWMALPYTIVLSIVGVMAIQ).

The protein belongs to the NhaB Na(+)/H(+) (TC 2.A.34) antiporter family.

The protein resides in the cell inner membrane. The enzyme catalyses 2 Na(+)(in) + 3 H(+)(out) = 2 Na(+)(out) + 3 H(+)(in). Its function is as follows. Na(+)/H(+) antiporter that extrudes sodium in exchange for external protons. The chain is Na(+)/H(+) antiporter NhaB from Shewanella sp. (strain ANA-3).